The chain runs to 357 residues: UDP-N-acetylglucosamine--N-acetylmuramyl-(pentapeptide) pyrophosphoryl-undecaprenol N-acetylglucosamine transferase (357 aa).

UDP-N-acetyl-alpha-D-glucosamine is bound by residues 11–13 (TGG), N123, R159, S187, I241, 260–265 (ALTVAE), and Q286.

This sequence belongs to the glycosyltransferase 28 family. MurG subfamily.

Its subcellular location is the cell inner membrane. The catalysed reaction is di-trans,octa-cis-undecaprenyl diphospho-N-acetyl-alpha-D-muramoyl-L-alanyl-D-glutamyl-meso-2,6-diaminopimeloyl-D-alanyl-D-alanine + UDP-N-acetyl-alpha-D-glucosamine = di-trans,octa-cis-undecaprenyl diphospho-[N-acetyl-alpha-D-glucosaminyl-(1-&gt;4)]-N-acetyl-alpha-D-muramoyl-L-alanyl-D-glutamyl-meso-2,6-diaminopimeloyl-D-alanyl-D-alanine + UDP + H(+). It functions in the pathway cell wall biogenesis; peptidoglycan biosynthesis. In terms of biological role, cell wall formation. Catalyzes the transfer of a GlcNAc subunit on undecaprenyl-pyrophosphoryl-MurNAc-pentapeptide (lipid intermediate I) to form undecaprenyl-pyrophosphoryl-MurNAc-(pentapeptide)GlcNAc (lipid intermediate II). This Aromatoleum aromaticum (strain DSM 19018 / LMG 30748 / EbN1) (Azoarcus sp. (strain EbN1)) protein is UDP-N-acetylglucosamine--N-acetylmuramyl-(pentapeptide) pyrophosphoryl-undecaprenol N-acetylglucosamine transferase.